The primary structure comprises 554 residues: MTPLIFVTGGVVSSLGKGIAAASLASILEARGLKVTMVKLDPYINVDPGTMSPFQHGEVYVTDDGAETDLDLGHYERFVRTRLSRNNSVTTGRIYQNVICKERRGDYLGATVQVIPHITDEIRRCIDEATASFDVALVEIGGTVGDIESLPFLEAIRQVRIERGAERTMFMHLTLVPYIAAAGELKTKPTQHSVKELRSIGIQPDVLLCRSEQVIPDSERRKIALFTNVSERAVIGCPDIDVLYGMPLELRRQGLDEIVIDQFKLSGTASLADLSEWEDVVDAIKHPLDEVTIAVVGKYVDYQDAYKSVGEALKHGGLRQRTKVNLKWVEAQDLEGSDMGALKDIDGILVPGGFGDRGFEGKVLASRYAREQRVPYFGICYGMQAAVVDYARHVAGLEGANSTENDRQSPHPVIALITEWRTTTGEVERRDEKSDLGGTMRLGLQEQRLKAGTLVRELYGRDVVGERHRHRYEFNNRYRTQLEDAGLVIAAKSMDDTLVEMIELPREMHPWFLACQAHPEFLSTPRDGHPLFIGFVKAARARKAGGKLLREVCV.

Residues 1–265 (MTPLIFVTGG…DEIVIDQFKL (265 aa)) form an amidoligase domain region. Ser13 contributes to the CTP binding site. Position 13 (Ser13) interacts with UTP. Residues 14-19 (SLGKGI) and Asp71 each bind ATP. 2 residues coordinate Mg(2+): Asp71 and Glu139. CTP-binding positions include 146–148 (DIE), 186–191 (KTKPTQ), and Lys222. Residues 186 to 191 (KTKPTQ) and Lys222 contribute to the UTP site. The Glutamine amidotransferase type-1 domain maps to 292–545 (TIAVVGKYVD…VKAARARKAG (254 aa)). Gly353 contacts L-glutamine. Cys380 functions as the Nucleophile; for glutamine hydrolysis in the catalytic mechanism. Residues 381–384 (YGMQ), Glu404, and Arg471 contribute to the L-glutamine site. Catalysis depends on residues His518 and Glu520.

This sequence belongs to the CTP synthase family. As to quaternary structure, homotetramer.

It catalyses the reaction UTP + L-glutamine + ATP + H2O = CTP + L-glutamate + ADP + phosphate + 2 H(+). The enzyme catalyses L-glutamine + H2O = L-glutamate + NH4(+). The catalysed reaction is UTP + NH4(+) + ATP = CTP + ADP + phosphate + 2 H(+). It functions in the pathway pyrimidine metabolism; CTP biosynthesis via de novo pathway; CTP from UDP: step 2/2. Its activity is regulated as follows. Allosterically activated by GTP, when glutamine is the substrate; GTP has no effect on the reaction when ammonia is the substrate. The allosteric effector GTP functions by stabilizing the protein conformation that binds the tetrahedral intermediate(s) formed during glutamine hydrolysis. Inhibited by the product CTP, via allosteric rather than competitive inhibition. Functionally, catalyzes the ATP-dependent amination of UTP to CTP with either L-glutamine or ammonia as the source of nitrogen. Regulates intracellular CTP levels through interactions with the four ribonucleotide triphosphates. The chain is CTP synthase from Xylella fastidiosa (strain 9a5c).